The primary structure comprises 1151 residues: Calcium-activated potassium channel subunit alpha-1 (1151 aa).

Positions 1 to 36 (MSSNIHANHLSLDASSSSSSSSSSSSSSSSSSSVHE) are disordered. Over 1 to 59 (MSSNIHANHLSLDASSSSSSSSSSSSSSSSSSSVHEPKMDALIIPVTMEVPCDSRGQRM) the chain is Extracellular. The segment covering 15 to 33 (SSSSSSSSSSSSSSSSSSS) has biased composition (low complexity). Residues 60 to 80 (WWAFLASSMVTFFGGLFIILL) form a helical membrane-spanning segment. The Cytoplasmic portion of the chain corresponds to 81 to 151 (WRTLKYLWTV…MISAQTLTGR (71 aa)). Residues cysteine 91, cysteine 92, and cysteine 94 are each lipidated (S-palmitoyl cysteine). A helical membrane pass occupies residues 152 to 172 (VLVVLVFALSIGALVIYFIDS). Topologically, residues 173–187 (SNPIESCQNFYKDFT) are extracellular. A helical membrane pass occupies residues 188-208 (LQIDMAFNVFFLLYFGLRFIA). At 209 to 212 (ANDK) the chain is on the cytoplasmic side. A helical transmembrane segment spans residues 213–233 (LWFWLEVNSVVDFFTVPPVFV). The Extracellular segment spans residues 234-237 (SVYL). The chain crosses the membrane as a helical; Voltage-sensor span at residues 238-258 (NRSWLGLRFLRALRLIQFSEI). Residues 259–273 (LQFLNILKTSNSIKL) lie on the Cytoplasmic side of the membrane. Residues 274–294 (VNLLSIFISTWLTAAGFIHLV) traverse the membrane as a helical segment. At 295-308 (ENSGDPWENFQNNQ) the chain is on the extracellular side. The segment at residues 309–331 (ALTYWECVYLLMVTMSTVGYGDV) is an intramembrane region (pore-forming). The Selectivity for potassium motif lies at 325–328 (TVGY). Over 332–340 (YAKTTLGRL) the chain is Extracellular. Residues 341-361 (FMVFFILGGLAMFASYVPEII) form a helical membrane-spanning segment. Over 362–1151 (ELIGNRKKYG…KQKYVQEERL (790 aa)) the chain is Cytoplasmic. Residues 380–522 (RKHIVVCGHI…WNWKEGDDAI (143 aa)) form the RCK N-terminal 1 domain. Glutamate 412, glutamine 435, and glutamate 437 together coordinate Mg(2+). The segment S7 stretch occupies residues 529-549 (LGFIAQSCLAQGLSTMLANLF). Residues 586 to 606 (LSFPTVCELCFVKLKLLMIAI) are segment S8. A heme-binding motif region spans residues 650 to 654 (CKACH). Residues 674 to 702 (EQPSTLSPKKKQRNGGMRNSPNSSPKLMR) are disordered. Position 678 is a phosphothreonine (threonine 678). Phosphoserine is present on residues serine 680, serine 693, and serine 697. Residues 752-772 (VLSGHVVVCIFGDVSSALIGL) form a segment S9 region. An RCK N-terminal 2 domain is found at 754-898 (SGHVVVCIFG…MDRSSPDNSP (145 aa)). Threonine 885 is subject to Phosphothreonine. Phosphoserine occurs at positions 893 and 897. Positions 918–940 (TELVNDTNVQFLDQDDDDDPDTE) match the Calcium bowl motif. Positions 927, 930, 933, and 935 each coordinate Ca(2+). The interval 947–967 (FACGTAFAVSVLDSLMSATYF) is segment S10. A compositionally biased stretch (low complexity) spans 1101–1126 (RASLSHSSHSSQSSSKKSSSVHSIPS). Residues 1101 to 1151 (RASLSHSSHSSQSSSKKSSSVHSIPSTANRQNRPKSRESRDKQKYVQEERL) are disordered. Residues 1135–1151 (KSRESRDKQKYVQEERL) are compositionally biased toward basic and acidic residues. Phosphoserine is present on residues serine 1136 and serine 1139.

The protein belongs to the potassium channel family. Calcium-activated (TC 1.A.1.3) subfamily. KCa1.1/KCNMA1 sub-subfamily. Homotetramer; which constitutes the calcium-activated potassium channel. Interacts with beta subunits KCNMB1, KCNMB2, KCNMB3 and KCNMB4. Interacts with gamma subunits LRRC26, LRRC38, LRRC52 and LRRC55. Beta and gamma subunits are accessory, and modulate its activity. Interacts with RAB11B. Phosphorylated. Phosphorylation by kinases such as PKA and/or PKG. In smooth muscles, phosphorylation affects its activity. Post-translationally, palmitoylation by ZDHHC22 and ZDHHC23 within the intracellular linker between the S0 and S1 transmembrane domains regulates localization to the plasma membrane. Depalmitoylated by LYPLA1 and LYPLAL1, leading to retard exit from the trans-Golgi network.

It is found in the cell membrane. It carries out the reaction K(+)(in) = K(+)(out). With respect to regulation, ethanol and carbon monoxide-bound heme increase channel activation. Heme inhibits channel activation. Functionally, potassium channel activated by both membrane depolarization or increase in cytosolic Ca(2+) that mediates export of K(+). It is also activated by the concentration of cytosolic Mg(2+). Its activation dampens the excitatory events that elevate the cytosolic Ca(2+) concentration and/or depolarize the cell membrane. It therefore contributes to repolarization of the membrane potential. Plays a key role in controlling excitability in a number of systems, such as regulation of the contraction of smooth muscle, the tuning of hair cells in the cochlea, regulation of transmitter release, and innate immunity. In smooth muscles, its activation by high level of Ca(2+), caused by ryanodine receptors in the sarcoplasmic reticulum, regulates the membrane potential. In cochlea cells, its number and kinetic properties partly determine the characteristic frequency of each hair cell and thereby helps to establish a tonotopic map. Kinetics of KCNMA1 channels are determined by alternative splicing, phosphorylation status and its combination with modulating beta subunits. Highly sensitive to both iberiotoxin (IbTx) and charybdotoxin (CTX). This chain is Calcium-activated potassium channel subunit alpha-1 (KCNMA1), found in Macaca mulatta (Rhesus macaque).